We begin with the raw amino-acid sequence, 217 residues long: uncharacterized protein (217 aa).

The span at 59 to 76 (AQSTIQRTSSLPVPSSSN) shows a compositional bias: polar residues. Disordered stretches follow at residues 59-105 (AQST…ETAN) and 124-217 (KKSL…HISK). The residue at position 68 (Ser-68) is a Phosphoserine. A Phosphothreonine modification is found at Thr-92. The segment covering 124 to 135 (KKSLERRVREEQ) has biased composition (basic and acidic residues). Acidic residues predominate over residues 136 to 147 (EEKTDNEDDNDV). The segment covering 148–157 (EISTQESLEN) has biased composition (polar residues). Positions 173 to 188 (LEDDIEGQEFSFDDQD) are enriched in acidic residues. The span at 199-217 (WLSSQKQQGSPLTSDHISK) shows a compositional bias: polar residues.

This is an uncharacterized protein from Schizosaccharomyces pombe (strain 972 / ATCC 24843) (Fission yeast).